The primary structure comprises 163 residues: Phosphopantetheine adenylyltransferase (163 aa).

Thr-11 serves as a coordination point for substrate. ATP contacts are provided by residues Thr-11–Phe-12 and His-19. Lys-43, Leu-75, and Arg-89 together coordinate substrate. Residues Gly-90–Arg-92, Glu-100, and Tyr-125–Thr-131 each bind ATP.

The protein belongs to the bacterial CoaD family. As to quaternary structure, homohexamer. Mg(2+) is required as a cofactor.

The protein resides in the cytoplasm. The enzyme catalyses (R)-4'-phosphopantetheine + ATP + H(+) = 3'-dephospho-CoA + diphosphate. It functions in the pathway cofactor biosynthesis; coenzyme A biosynthesis; CoA from (R)-pantothenate: step 4/5. Reversibly transfers an adenylyl group from ATP to 4'-phosphopantetheine, yielding dephospho-CoA (dPCoA) and pyrophosphate. The protein is Phosphopantetheine adenylyltransferase of Acinetobacter baylyi (strain ATCC 33305 / BD413 / ADP1).